The sequence spans 341 residues: Transcription factor JunD (341 aa).

Positions 21 to 49 (VAGAAGAPGGGGFAPPGRAFPGAPPTSSM) are disordered. The short motif at 35-47 (PPGRAFPGAPPTS) is the Menin-binding motif (MBM) element. The MAP kinase docking motif; essential for its phosphorylation motif lies at 51-60 (KKDALTLSLA). The interval 65–85 (AGLKPGSATAPSALRPDGAPD) is disordered. Position 90 is a phosphoserine (S90). S100 bears the Phosphoserine; by MAPK8 mark. T117 is subject to Phosphothreonine. The segment at 155–176 (AATAATSGAPAPPAPADLAATP) is disordered. A phosphoserine mark is found at S245, S249, and S253. The basic motif stretch occupies residues 262–289 (RIKAERKRLRNRIAASKCRKRKLERISR). Positions 262 to 325 (RIKAERKRLR…AQLKQKVLSH (64 aa)) constitute a bZIP domain. A leucine-zipper region spans residues 290-318 (LEEKVKTLKSQNTELASTASLLREQVAQL).

The protein belongs to the bZIP family. Jun subfamily. Heterodimer; binds DNA as a heterodimer. Component of an AP-1 transcription factor complex composed of JUN-FOS heterodimers. As part of the AP-1 transcription factor complex, forms heterodimers with FOS proteins, thereby binding to the AP-1 consensus sequence and stimulating transcription. Forms heterodimers with FOSB; thereby binding to the AP-1 consensus sequence. Interacts (via MBM motif) with MEN1; this interaction represses transcriptional activation. Interacts with MAPK10; this interaction is inhibited in the presence of MEN1. In terms of processing, phosphorylated by MAP kinases MAPK8 and MAPK10; phosphorylation is inhibited in the presence of MEN1.

The protein localises to the nucleus. In terms of biological role, transcription factor binding AP-1 sites. Heterodimerizes with proteins of the FOS family to form an AP-1 transcription factor complex, thereby enhancing their DNA binding activity to an AP-1 consensus sequence 3'-TGA[GC]TCA-5' and enhancing their transcriptional activity. The sequence is that of Transcription factor JunD (Jund) from Rattus norvegicus (Rat).